The primary structure comprises 723 residues: FACT complex subunit Ssrp1 (723 aa).

Serine 443 is modified (phosphoserine). Disordered stretches follow at residues 459–564 (EARE…AFML) and 586–723 (AKKG…EASD). Composition is skewed to acidic residues over residues 464–478 (EEDD…ESTD) and 486–507 (NESD…DDSD). Basic residues predominate over residues 531 to 557 (KKEKKHKEKERTKKPSKKKKDSGKPKR). The segment at residues 555 to 621 (PKRATTAFML…RYHDEMRNYK (67 aa)) is a DNA-binding region (HMG box). Positions 586–621 (AKKGGEMWKELKDKSKWEDAAAKDKQRYHDEMRNYK) are enriched in basic and acidic residues. Serine 628 carries the post-translational modification Phosphoserine. A compositionally biased stretch (polar residues) spans 644 to 656 (PSPSKKANTSGSG). A phosphoserine mark is found at serine 664 and serine 668. A compositionally biased stretch (acidic residues) spans 664–676 (SDDDSTSSDDEKD). Position 669 is a phosphothreonine (threonine 669). A phosphoserine mark is found at serine 670 and serine 671. The segment covering 677–692 (NEPAKKKSKPPSDGDA) has biased composition (basic and acidic residues). The segment covering 702–723 (EPEESEEDSNASDEDEEDEASD) has biased composition (acidic residues).

The protein belongs to the SSRP1 family. As to quaternary structure, component of the FACT complex, a stable heterodimer of dre4/spt16 and Ssrp. Interacts with CHD1 and TRL/GAGA. As to expression, expressed at highest levels in nurse cells of the ovary.

Its subcellular location is the nucleus. The protein resides in the chromosome. It localises to the nucleolus. Component of the FACT complex, a general chromatin factor that acts to reorganize nucleosomes. The FACT complex is involved in multiple processes that require DNA as a template such as mRNA elongation, DNA replication and DNA repair. During transcription elongation the FACT complex acts as a histone chaperone that both destabilizes and restores nucleosomal structure. It facilitates the passage of RNA polymerase II and transcription by promoting the dissociation of one histone H2A-H2B dimer from the nucleosome, then subsequently promotes the reestablishment of the nucleosome following the passage of RNA polymerase II. Binds specifically to single-stranded DNA and RNA with highest affinity for nucleotides G and U. The FACT complex is required for expression of Hox genes. The polypeptide is FACT complex subunit Ssrp1 (Ssrp) (Drosophila melanogaster (Fruit fly)).